An 83-amino-acid chain; its full sequence is Molybdopterin synthase sulfur carrier subunit (83 aa).

A 1-thioglycine; alternate modification is found at G83. A Glycyl adenylate; alternate modification is found at G83.

It belongs to the MoaD family. MOCS2A subfamily. Heterotetramer; composed of 2 small (MOCS2A) and 2 large (MOCS2B) subunits. Post-translationally, C-terminal thiocarboxylation occurs in 2 steps, it is first acyl-adenylated (-COAMP) via the hesA/moeB/thiF part of MOCS3, then thiocarboxylated (-COSH) via the rhodanese domain of MOCS3.

It is found in the cytoplasm. It participates in cofactor biosynthesis; molybdopterin biosynthesis. In terms of biological role, acts as a sulfur carrier required for molybdopterin biosynthesis. Component of the molybdopterin synthase complex that catalyzes the conversion of precursor Z into molybdopterin by mediating the incorporation of 2 sulfur atoms into precursor Z to generate a dithiolene group. In the complex, serves as sulfur donor by being thiocarboxylated (-COSH) at its C-terminus by MOCS3. After interaction with MOCS2B, the sulfur is then transferred to precursor Z to form molybdopterin. The chain is Molybdopterin synthase sulfur carrier subunit from Chlamydomonas reinhardtii (Chlamydomonas smithii).